A 319-amino-acid chain; its full sequence is G-protein coupled receptor 171 (319 aa).

The Extracellular portion of the chain corresponds to 1–21 (MTNSSTFCPVYRDLEPFTYFF). N-linked (GlcNAc...) asparagine glycosylation is present at N3. The chain crosses the membrane as a helical span at residues 22 to 42 (YLVFLIGIIGSCFATWAFIQK). At 43-48 (TTNHRC) the chain is on the cytoplasmic side. Residues 49 to 69 (VSIYLINLLTADFLLTLALPV) form a helical membrane-spanning segment. The Extracellular segment spans residues 70-89 (KIIVDLGVAPWKLRIFHCQV). Residues 90–110 (TACLIYINMYLSIIFLAFVSI) form a helical membrane-spanning segment. Residues 111–132 (DRCLQLIHSCKIYRIQEPGFAK) are Cytoplasmic-facing. Residues 133-153 (MISAVVWLMVLLIMVPNMVIP) form a helical membrane-spanning segment. The Extracellular portion of the chain corresponds to 154-181 (IKDIKEKSNVGCMEFKKEFGRNWHLLTN). A helical transmembrane segment spans residues 182–202 (FICVAIFLNFSVIILISNFLA). The Cytoplasmic segment spans residues 203 to 224 (IRQLYRNRDNTNYPSVKSALLH). A helical transmembrane segment spans residues 225–245 (ILLVTASYIICFVPYHAVRIP). At 246–268 (YTLSQTEVISDCSTRIALFKAKE) the chain is on the extracellular side. A helical membrane pass occupies residues 269–289 (ATLLLAVSNLCFDPILYYHLS). Topologically, residues 290-319 (KAFRLKVTETFASPKKSKPLEERLRSENDV) are cytoplasmic.

Belongs to the G-protein coupled receptor 1 family. In terms of tissue distribution, highly expressed in hypothalamus, including the arcuate nucleus, paraventricular nucleus and dorsomedial hypothalamus. Expressed in periaqueductal gray (at protein level), found primarily in GABAergic neurons and to a lesser extent in glutamatergic neurons. Expressed in T cells and natural killer cells.

The protein localises to the cell membrane. G-protein coupled receptor for Big LEN, a 16-amino acid neuropeptide produced from the precursor protein, proSAAS (encoded by PCSK1N). Acts through a G(i)-alpha-mediated pathway in response to Big LEN. Big LEN-GPR171 system plays an important role in regulating feeding and metabolism. Also plays a role in modulating fear and anxiety-like behaviors in the basolateral amygdala. Big LEN-GPR171 modulates the mu-type opioid receptor signaling and antinociception. Acts as a negative regulator T cell function. This Mus musculus (Mouse) protein is G-protein coupled receptor 171 (Gpr171).